The chain runs to 527 residues: DUF21 domain-containing protein At1g47330 (527 aa).

The Extracellular segment spans residues 1-15; the sequence is MSSDIPCCGTTFSLY. In terms of domain architecture, CNNM transmembrane spans 8 to 191; it reads CGTTFSLYVV…GKGGDLTTDE (184 aa). Residues 16 to 36 traverse the membrane as a helical segment; that stretch reads VVIIIALVAFAGLMAGLTLGL. Topologically, residues 37-70 are cytoplasmic; that stretch reads MSLGLVDLEVLIKSGRPQDRINAGKIFPVVKNQH. The chain crosses the membrane as a helical span at residues 71-91; the sequence is LLLCTLLIGNSMAMEALPIFL. The Extracellular portion of the chain corresponds to 92–93; sequence DK. The helical transmembrane segment at 94 to 114 threads the bilayer; it reads IVPPWLAILLSVTLILVFGEI. Over 115-126 the chain is Cytoplasmic; sequence MPQAVCTRYGLK. A helical transmembrane segment spans residues 127-147; that stretch reads VGAIMAPFVRVLLVLFFPISY. The Extracellular portion of the chain corresponds to 148–527; the sequence is PISKVLDWML…PKHEESTQTL (380 aa). CBS domains are found at residues 210-271, 274-334, and 366-435; these read MTPI…EVPL, MSMR…TKDE, and KSEN…ILDE. Disordered regions lie at residues 307 to 335, 358 to 384, and 464 to 527; these read KDLDEQEQSPETSENGIERRKNKKTKDEL, ETGDAKSGKSENGEEQQGSGKTSLLAA, and ITQS…TQTL. A Phosphoserine modification is found at S315. Over residues 358-369 the composition is skewed to basic and acidic residues; sequence ETGDAKSGKSEN. Positions 464 to 501 are enriched in low complexity; that stretch reads ITQSSSGSTSPNQTSHMATPDSSPTTKPSNSSPTRKPS. N-linked (GlcNAc...) asparagine glycosylation occurs at N475. Residues 502 to 515 are compositionally biased toward polar residues; that stretch reads VSSPTREPSDSSHS. Residues 518–527 are compositionally biased toward basic and acidic residues; it reads PKHEESTQTL.

Its subcellular location is the membrane. This Arabidopsis thaliana (Mouse-ear cress) protein is DUF21 domain-containing protein At1g47330 (CBSDUF7).